We begin with the raw amino-acid sequence, 304 residues long: UDP-N-acetylenolpyruvoylglucosamine reductase (304 aa).

In terms of domain architecture, FAD-binding PCMH-type spans R31–G196. R176 is a catalytic residue. Catalysis depends on S225, which acts as the Proton donor. The active site involves E295.

Belongs to the MurB family. It depends on FAD as a cofactor.

It localises to the cytoplasm. It catalyses the reaction UDP-N-acetyl-alpha-D-muramate + NADP(+) = UDP-N-acetyl-3-O-(1-carboxyvinyl)-alpha-D-glucosamine + NADPH + H(+). It functions in the pathway cell wall biogenesis; peptidoglycan biosynthesis. Functionally, cell wall formation. This Methylococcus capsulatus (strain ATCC 33009 / NCIMB 11132 / Bath) protein is UDP-N-acetylenolpyruvoylglucosamine reductase.